The sequence spans 242 residues: Probable proteasome subunit alpha type-7 (242 aa).

Belongs to the peptidase T1A family. As to quaternary structure, the 26S proteasome consists of a 20S proteasome core and two 19S regulatory subunits. The 20S proteasome core is composed of 28 subunits that are arranged in four stacked rings, resulting in a barrel-shaped structure. The two end rings are each formed by seven alpha subunits, and the two central rings are each formed by seven beta subunits. The catalytic chamber with the active sites is on the inside of the barrel.

It is found in the cytoplasm. Its subcellular location is the nucleus. Functionally, the proteasome degrades poly-ubiquitinated proteins in the cytoplasm and in the nucleus. It is essential for the regulated turnover of proteins and for the removal of misfolded proteins. The proteasome is a multicatalytic proteinase complex that is characterized by its ability to cleave peptides with Arg, Phe, Tyr, Leu, and Glu adjacent to the leaving group at neutral or slightly basic pH. It has an ATP-dependent proteolytic activity. The polypeptide is Probable proteasome subunit alpha type-7 (PRE10) (Encephalitozoon cuniculi (strain GB-M1) (Microsporidian parasite)).